We begin with the raw amino-acid sequence, 226 residues long: PKHD-type hydroxylase AZC_3753 (226 aa).

Residues 78-178 (RILPPMFNRY…RVASFFWTQS (101 aa)) form the Fe2OG dioxygenase domain. 3 residues coordinate Fe cation: H96, D98, and H159. R169 lines the 2-oxoglutarate pocket.

Requires Fe(2+) as cofactor. L-ascorbate is required as a cofactor.

This is PKHD-type hydroxylase AZC_3753 from Azorhizobium caulinodans (strain ATCC 43989 / DSM 5975 / JCM 20966 / LMG 6465 / NBRC 14845 / NCIMB 13405 / ORS 571).